Consider the following 369-residue polypeptide: Fructose-bisphosphate aldolase 2 (369 aa).

D40 lines the dihydroxyacetone phosphate pocket. Positions 42 and 45 each coordinate D-glyceraldehyde 3-phosphate. R49 lines the beta-D-fructose 1,6-bisphosphate pocket. Residue K113 coordinates D-glyceraldehyde 3-phosphate. K152 serves as a coordination point for dihydroxyacetone phosphate. E195 contributes to the D-glyceraldehyde 3-phosphate binding site. The Proton acceptor role is filled by E195. Dihydroxyacetone phosphate is bound by residues K237, S279, and G280. The active-site Schiff-base intermediate with dihydroxyacetone phosphate is the K237. Beta-D-fructose 1,6-bisphosphate contacts are provided by residues 279 to 281 and S307; that span reads SGG. The dihydroxyacetone phosphate site is built by G309 and R310. R310 is a binding site for beta-D-fructose 1,6-bisphosphate.

The protein belongs to the class I fructose-bisphosphate aldolase family.

The protein resides in the cytoplasm. It localises to the membrane. It is found in the host cell membrane. The catalysed reaction is beta-D-fructose 1,6-bisphosphate = D-glyceraldehyde 3-phosphate + dihydroxyacetone phosphate. Its pathway is carbohydrate degradation; glycolysis; D-glyceraldehyde 3-phosphate and glycerone phosphate from D-glucose: step 4/4. Its function is as follows. Plays a key role in glycolysis by catalyzing the cleavage of fructose 1,6-bisphosphate into dihydroxyacetone phosphate and glyceraldehyde 3-phosphate. This chain is Fructose-bisphosphate aldolase 2 (ALDO2), found in Plasmodium berghei (strain Anka).